We begin with the raw amino-acid sequence, 355 residues long: MFKEKLQPFIDRYNEISELLSSPDIASDINRMTELSKEQSGLAPLVEKANLYIETADAIAENKELLSDEELGDLAKEELSELEPMLPKLEEEIKILMIPKDKNDDKNIFLELRAGAGGDESALFVADVFRMYSRYAEQMGWKVEIVSTNDGTAGGYKELIAEIKGQGVYSQLKYEAGTHRVQRVPDTETQGRVHTSAITVAVIPEVDDVEVDIKPNEVKMDVYRSSGCGGQSVNTTDSAVRLTHIPTGIVVAIQDEKSQHKNRDKAMKVLKARVYESELQKQLDETAGQRKLQVGSGDRSEKIRTYNYPQNRLTDHRIGLTLYALDDVMNNGNLKLVIDPLIAHAQTEAIQEAGL.

Gln231 carries the N5-methylglutamine modification.

The protein belongs to the prokaryotic/mitochondrial release factor family. Post-translationally, methylated by PrmC. Methylation increases the termination efficiency of RF1.

It localises to the cytoplasm. Its function is as follows. Peptide chain release factor 1 directs the termination of translation in response to the peptide chain termination codons UAG and UAA. This chain is Peptide chain release factor 1, found in Sulfurovum sp. (strain NBC37-1).